The sequence spans 467 residues: Asparagine--tRNA ligase (467 aa).

It belongs to the class-II aminoacyl-tRNA synthetase family. In terms of assembly, homodimer.

The protein resides in the cytoplasm. It catalyses the reaction tRNA(Asn) + L-asparagine + ATP = L-asparaginyl-tRNA(Asn) + AMP + diphosphate + H(+). The protein is Asparagine--tRNA ligase of Haemophilus influenzae (strain PittEE).